The chain runs to 424 residues: Dihydroorotase (424 aa).

Zn(2+) is bound by residues His61 and His63. Substrate contacts are provided by residues 63-65 and Asn95; that span reads HLR. The Zn(2+) site is built by Asp153, His180, and His233. Position 279 (Asn279) interacts with substrate. Asp306 serves as a coordination point for Zn(2+). Asp306 is an active-site residue. His310 is a binding site for substrate.

The protein belongs to the metallo-dependent hydrolases superfamily. DHOase family. Class I DHOase subfamily. The cofactor is Zn(2+).

The enzyme catalyses (S)-dihydroorotate + H2O = N-carbamoyl-L-aspartate + H(+). Its pathway is pyrimidine metabolism; UMP biosynthesis via de novo pathway; (S)-dihydroorotate from bicarbonate: step 3/3. In terms of biological role, catalyzes the reversible cyclization of carbamoyl aspartate to dihydroorotate. The sequence is that of Dihydroorotase from Pelobacter propionicus (strain DSM 2379 / NBRC 103807 / OttBd1).